Reading from the N-terminus, the 956-residue chain is Chromatin assembly factor 1 subunit A (956 aa).

Residues 1-49 (MLEELECGAPGARGAATAMDCKDRPAFPVKKLIQARLPFKRLNLVPKGK) are binds to PCNA. The segment at 1–314 (MLEELECGAP…QHSSTSPFPT (314 aa)) is binds to CBX1 chromo shadow domain. Disordered regions lie at residues 45-65 (VPKG…QSKS) and 122-155 (DSNE…EDTG). Positions 56 to 65 (DQGTSVQSKS) are enriched in polar residues. 5 positions are modified to phosphoserine: Ser65, Ser123, Ser138, Ser141, and Ser143. Residue Lys182 forms a Glycyl lysine isopeptide (Lys-Gly) (interchain with G-Cter in SUMO1); alternate linkage. Lys182 is covalently cross-linked (Glycyl lysine isopeptide (Lys-Gly) (interchain with G-Cter in SUMO2); alternate). The tract at residues 188-222 (VGCGGAGRRGDSQECSPRSCPELTSGPRMCPRKEQ) is disordered. Residues Ser206 and Ser224 each carry the phosphoserine modification. The short motif at 233-246 (FKGKVPMVVLQDIL) is the PxVxL motif element. 2 disordered regions span residues 250–432 (PPQI…KRLR) and 599–639 (DSDE…VPHG). Composition is skewed to low complexity over residues 282-296 (LSHS…TSSP) and 307-317 (SSTSPFPTSTP). Residue Ser310 is modified to Phosphoserine. Positions 329–432 (STEKNKLRLQ…RKKEEEKRLR (104 aa)) are enriched in basic and acidic residues. Acidic residues-rich tracts occupy residues 599–610 (DSDEEWEEEEPG) and 618–633 (GDDD…EDDG). A necessary for homodimerization and competence for chromatin assembly region spans residues 642 to 678 (SEDEGVTEECADPENHKVRQKLKAKEWDEFLAKGKRF). Residues 660–956 (RQKLKAKEWD…TLTASPLGAS (297 aa)) are binds to p60. Phosphothreonine is present on Thr722. Residues 765–790 (LLSNHTGSPRSPSTTYLHTPTPSEDA) are disordered. Residues 767–786 (SNHTGSPRSPSTTYLHTPTP) are compositionally biased toward polar residues. Residues Ser772, Ser775, and Ser803 each carry the phosphoserine modification. 2 disordered regions span residues 844–873 (SVPS…KRKS) and 933–956 (SGAG…LGAS). Residues 855 to 866 (SVPSTGPSQGTP) are compositionally biased toward polar residues. Phosphothreonine is present on Thr865. Phosphoserine occurs at positions 868, 873, and 951.

It belongs to the CHAF1A family. In terms of assembly, homodimer. Part of the CAF-1 complex that contains RBBP4, CHAF1B and CHAF1A. CHAF1A binds directly to CHAF1B. Only minor amounts of RBBP4 are complexed with CHAF1A and CHAF1B in G1 phase. Interacts with PCNA; the interaction is direct. Interacts (via the PxVxL motif) with CBX5; the interaction is direct. Interacts with MBD1. Interacts with histones H3.1, H3.2 and H3.1t.

Its subcellular location is the nucleus. Acts as a component of the histone chaperone complex chromatin assembly factor 1 (CAF-1), which assembles histone octamers onto DNA during replication and repair. CAF-1 performs the first step of the nucleosome assembly process, bringing newly synthesized histones H3 and H4 to replicating DNA; histones H2A/H2B can bind to this chromatin precursor subsequent to DNA replication to complete the histone octamer. It may play a role in heterochromatin maintenance in proliferating cells by bringing newly synthesized cbx proteins to heterochromatic DNA replication foci. The polypeptide is Chromatin assembly factor 1 subunit A (Homo sapiens (Human)).